A 165-amino-acid polypeptide reads, in one-letter code: Peptide methionine sulfoxide reductase MsrA (165 aa).

Residue Cys11 is part of the active site.

Belongs to the MsrA Met sulfoxide reductase family.

It carries out the reaction L-methionyl-[protein] + [thioredoxin]-disulfide + H2O = L-methionyl-(S)-S-oxide-[protein] + [thioredoxin]-dithiol. The enzyme catalyses [thioredoxin]-disulfide + L-methionine + H2O = L-methionine (S)-S-oxide + [thioredoxin]-dithiol. In terms of biological role, has an important function as a repair enzyme for proteins that have been inactivated by oxidation. Catalyzes the reversible oxidation-reduction of methionine sulfoxide in proteins to methionine. The protein is Peptide methionine sulfoxide reductase MsrA of Ureaplasma parvum serovar 3 (strain ATCC 27815 / 27 / NCTC 11736).